A 521-amino-acid polypeptide reads, in one-letter code: Apolipoprotein N-acyltransferase (521 aa).

The next 6 membrane-spanning stretches (helical) occupy residues 34 to 54 (LAAP…PLLV), 64 to 84 (AFWL…RWLL), 100 to 120 (LAIA…VIGL), 137 to 157 (LFAV…ETAF), 176 to 196 (VALG…ALVA), and 206 to 226 (YAGL…WQLA). The 241-residue stretch at 240 to 480 (IQGNIAQARK…YAAFVEPVRL (241 aa)) folds into the CN hydrolase domain. The Proton acceptor role is filled by E281. K341 is a catalytic residue. C392 serves as the catalytic Nucleophile. The helical transmembrane segment at 488-508 (ALWGDWFVPLSAALALLGLIA) threads the bilayer.

It belongs to the CN hydrolase family. Apolipoprotein N-acyltransferase subfamily.

Its subcellular location is the cell inner membrane. The catalysed reaction is N-terminal S-1,2-diacyl-sn-glyceryl-L-cysteinyl-[lipoprotein] + a glycerophospholipid = N-acyl-S-1,2-diacyl-sn-glyceryl-L-cysteinyl-[lipoprotein] + a 2-acyl-sn-glycero-3-phospholipid + H(+). It functions in the pathway protein modification; lipoprotein biosynthesis (N-acyl transfer). In terms of biological role, catalyzes the phospholipid dependent N-acylation of the N-terminal cysteine of apolipoprotein, the last step in lipoprotein maturation. This is Apolipoprotein N-acyltransferase from Gloeobacter violaceus (strain ATCC 29082 / PCC 7421).